The primary structure comprises 342 residues: Foldase protein PrsA (342 aa).

Residues 1–22 (MVSVKKIVASALVGVLMFSAVG) form the signal peptide. Residue Cys23 is the site of N-palmitoyl cysteine attachment. Cys23 carries S-diacylglycerol cysteine lipidation. The region spanning 189–284 (DSGVLTKHLL…FGYHIIQAGA (96 aa)) is the PpiC domain.

The protein belongs to the PrsA family.

The protein resides in the cell membrane. The catalysed reaction is [protein]-peptidylproline (omega=180) = [protein]-peptidylproline (omega=0). Plays a major role in protein secretion by helping the post-translocational extracellular folding of several secreted proteins. The protein is Foldase protein PrsA of Clostridium perfringens (strain ATCC 13124 / DSM 756 / JCM 1290 / NCIMB 6125 / NCTC 8237 / Type A).